Reading from the N-terminus, the 346-residue chain is Magnesium-protoporphyrin IX monomethyl ester [oxidative] cyclase (346 aa).

This sequence belongs to the AcsF family. Fe cation is required as a cofactor.

It carries out the reaction Mg-protoporphyrin IX 13-monomethyl ester + 3 NADPH + 3 O2 + 2 H(+) = 3,8-divinyl protochlorophyllide a + 3 NADP(+) + 5 H2O. It participates in porphyrin-containing compound metabolism; chlorophyll biosynthesis (light-independent). Functionally, catalyzes the formation of the isocyclic ring in chlorophyll biosynthesis. Mediates the cyclase reaction, which results in the formation of divinylprotochlorophyllide (Pchlide) characteristic of all chlorophylls from magnesium-protoporphyrin IX 13-monomethyl ester (MgPMME). The polypeptide is Magnesium-protoporphyrin IX monomethyl ester [oxidative] cyclase (Gloeobacter violaceus (strain ATCC 29082 / PCC 7421)).